The primary structure comprises 266 residues: Enterotoxin type C-3 (266 aa).

The signal sequence occupies residues 1–27 (MYKRLFISRVILIFALILVISTPNVLA). Zn(2+) is bound by residues Asp-36 and Asp-110. A disulfide bridge links Cys-120 with Cys-137. Zn(2+) contacts are provided by His-145 and His-149.

Belongs to the staphylococcal/streptococcal toxin family. As to quaternary structure, interacts with MHC class II molecules composed of alpha/HLA-DRA and beta/HLA-DRB1 chains. Interacts with host T-cell receptor/TCR beta variable chain TRBV8-2.

The protein localises to the secreted. Its function is as follows. Staphylococcal enterotoxin that activates the host immune system by binding as unprocessed molecules to major histocompatibility (MHC) complex class II and T-cell receptor (TCR) molecules. In turn, this ternary complex activates a large number of T-lymphocytes initiating a systemic release of pro-inflammatory cytokines. Also causes the intoxication staphylococcal food poisoning syndrome. The chain is Enterotoxin type C-3 (entC3) from Staphylococcus aureus.